A 100-amino-acid polypeptide reads, in one-letter code: NADH-quinone oxidoreductase subunit K (100 aa).

Transmembrane regions (helical) follow at residues leucine 4–isoleucine 24, leucine 28–valine 48, and valine 60–leucine 80.

Belongs to the complex I subunit 4L family. NDH-1 is composed of 13 different subunits. Subunits NuoA, H, J, K, L, M, N constitute the membrane sector of the complex.

It is found in the cell inner membrane. It carries out the reaction a quinone + NADH + 5 H(+)(in) = a quinol + NAD(+) + 4 H(+)(out). NDH-1 shuttles electrons from NADH, via FMN and iron-sulfur (Fe-S) centers, to quinones in the respiratory chain. The immediate electron acceptor for the enzyme in this species is believed to be ubiquinone. Couples the redox reaction to proton translocation (for every two electrons transferred, four hydrogen ions are translocated across the cytoplasmic membrane), and thus conserves the redox energy in a proton gradient. This Musicola paradisiaca (strain Ech703) (Dickeya paradisiaca) protein is NADH-quinone oxidoreductase subunit K.